We begin with the raw amino-acid sequence, 384 residues long: N-acetyldiaminopimelate deacetylase (384 aa).

Asp-73 is an active-site residue. Catalysis depends on Glu-132, which acts as the Proton acceptor.

The protein belongs to the peptidase M20A family. N-acetyldiaminopimelate deacetylase subfamily.

It catalyses the reaction N-acetyl-(2S,6S)-2,6-diaminopimelate + H2O = (2S,6S)-2,6-diaminopimelate + acetate. It functions in the pathway amino-acid biosynthesis; L-lysine biosynthesis via DAP pathway; LL-2,6-diaminopimelate from (S)-tetrahydrodipicolinate (acetylase route): step 3/3. In terms of biological role, catalyzes the conversion of N-acetyl-diaminopimelate to diaminopimelate and acetate. The polypeptide is N-acetyldiaminopimelate deacetylase (Limosilactobacillus fermentum (strain NBRC 3956 / LMG 18251) (Lactobacillus fermentum)).